The following is a 172-amino-acid chain: Light-harvesting complex-like protein OHP2, chloroplastic (172 aa).

The N-terminal 43 residues, 1–43, are a transit peptide targeting the chloroplast; that stretch reads MSVASPIQCIRILNPSSSSSSSTASSSFRFSTTTKPCVFIIRC. At 44 to 135 the chain is on the stromal side; sequence SQTEGPLRRP…QPKNEISNGR (92 aa). Positions 45-90 are disordered; it reads QTEGPLRRPSAPPTLREPQKPVPPSQPSSSPPPSPPPQKAVAVDGK. The span at 64-82 shows a compositional bias: pro residues; the sequence is KPVPPSQPSSSPPPSPPPQ. The helical transmembrane segment at 136–156 threads the bilayer; that stretch reads WAMFGFAVGMLTEYATGSDLV. Topologically, residues 157 to 172 are lumenal; that stretch reads DQVKILLSNFGILDLE.

Belongs to the ELIP/psbS family. In terms of assembly, component of a high molecular weight complex containing OHP1, OHP2 and HCF244, and PSII core proteins D1/D2, HCF136 and HCF173. Forms a trimeric complex with OHP1 and HCF244 that mutually stabilizes each subunit.

It localises to the plastid. It is found in the chloroplast thylakoid membrane. May play a photoprotective role within PSI in response to light stress. Forms a trimeric complex with OHP1 and HCF244 that is required to promote PSII core subunit assembly. The trimeric complex forms a transient PSII reaction center-like complex with PsbA, PsbD, PsbE, PsbF and PsbI subunits in thylakoids for early assembly of PSII as well as PSII repair. The trimeric complex is required for the recruitment of ribosomes to the psbA mRNA during PSII biogenesis and repair. Forms a heterodimer with OHP1 that binds chlorophylls and carotenoids, and that may function in the delivery of pigments to the PsbA subunit of PSII. The protein is Light-harvesting complex-like protein OHP2, chloroplastic of Arabidopsis thaliana (Mouse-ear cress).